Consider the following 40-residue polypeptide: MADTTGRIPLWLIGTVTGIPVIGSIGIFFYGSYSGLGSSL.

The chain crosses the membrane as a helical span at residues 8 to 28 (IPLWLIGTVTGIPVIGSIGIF).

This sequence belongs to the PsbJ family. As to quaternary structure, PSII is composed of 1 copy each of membrane proteins PsbA, PsbB, PsbC, PsbD, PsbE, PsbF, PsbH, PsbI, PsbJ, PsbK, PsbL, PsbM, PsbT, PsbX, PsbY, PsbZ, Psb30/Ycf12, at least 3 peripheral proteins of the oxygen-evolving complex and a large number of cofactors. It forms dimeric complexes.

Its subcellular location is the plastid. The protein resides in the chloroplast thylakoid membrane. In terms of biological role, one of the components of the core complex of photosystem II (PSII). PSII is a light-driven water:plastoquinone oxidoreductase that uses light energy to abstract electrons from H(2)O, generating O(2) and a proton gradient subsequently used for ATP formation. It consists of a core antenna complex that captures photons, and an electron transfer chain that converts photonic excitation into a charge separation. The protein is Photosystem II reaction center protein J of Chloranthus spicatus (Chulantree).